The sequence spans 37 residues: Large ribosomal subunit protein bL36 (37 aa).

It belongs to the bacterial ribosomal protein bL36 family.

This Trichlorobacter lovleyi (strain ATCC BAA-1151 / DSM 17278 / SZ) (Geobacter lovleyi) protein is Large ribosomal subunit protein bL36.